Here is a 260-residue protein sequence, read N- to C-terminus: Proteasome subunit alpha (260 aa).

Residues 241 to 260 (VEEEEVKEKEEDYSELDSHY) are disordered.

This sequence belongs to the peptidase T1A family. The 20S proteasome core is composed of 14 alpha and 14 beta subunits that assemble into four stacked heptameric rings, resulting in a barrel-shaped structure. The two inner rings, each composed of seven catalytic beta subunits, are sandwiched by two outer rings, each composed of seven alpha subunits. The catalytic chamber with the active sites is on the inside of the barrel. Has a gated structure, the ends of the cylinder being occluded by the N-termini of the alpha-subunits. Is capped at one or both ends by the proteasome regulatory ATPase, PAN.

The protein localises to the cytoplasm. The formation of the proteasomal ATPase PAN-20S proteasome complex, via the docking of the C-termini of PAN into the intersubunit pockets in the alpha-rings, triggers opening of the gate for substrate entry. Interconversion between the open-gate and close-gate conformations leads to a dynamic regulation of the 20S proteasome proteolysis activity. Component of the proteasome core, a large protease complex with broad specificity involved in protein degradation. The sequence is that of Proteasome subunit alpha from Pyrococcus horikoshii (strain ATCC 700860 / DSM 12428 / JCM 9974 / NBRC 100139 / OT-3).